The sequence spans 314 residues: BTB/POZ domain-containing protein KCTD17 (314 aa).

The BTB domain occupies 24–94 (KWVRLNVGGT…LRHGKLVLDK (71 aa)). Residues 190–268 (STPNGLSSES…PAGGSRPHPL (79 aa)) are disordered. Residues 196–239 (SSESSRKTKSTEEQLEEQQQQEEEVEEVEVEQVQVEADAQEKAQ) are a coiled coil. Residues 208–225 (EQLEEQQQQEEEVEEVEV) are compositionally biased toward acidic residues.

In terms of assembly, homopentamer; forms a closed pentamer. Interacts with CUL3; interaction is direct and forms a 5:5 heterodecamer. Interacts with TCHP. Interacts with CUL3, as part of the BCR(KCTD17) E3 ubiquitin ligase complex, at least composed of CUL3, KCTD17 and RBX1. In terms of tissue distribution, highly expressed in brain. Highest expression is observed in the putamen and the thalamus.

It localises to the cytoplasm. In terms of biological role, substrate-adapter for CUL3-RING ubiquitin ligase complexes which mediates the ubiquitination and subsequent proteasomal degradation of TCHP, a protein involved in ciliogenesis down-regulation. Thereby, positively regulates ciliogenesis, playing a crucial role in the initial steps of axoneme extension. May also play a role in endoplasmic reticulum calcium ion homeostasis. The chain is BTB/POZ domain-containing protein KCTD17 from Homo sapiens (Human).